The primary structure comprises 320 residues: Phosphatidylserine decarboxylase proenzyme (320 aa).

Residues Asp-90, His-147, and Ser-254 each act as charge relay system; for autoendoproteolytic cleavage activity in the active site. Ser-254 functions as the Schiff-base intermediate with substrate; via pyruvic acid; for decarboxylase activity in the catalytic mechanism. A Pyruvic acid (Ser); by autocatalysis modification is found at Ser-254. The disordered stretch occupies residues 290-320; the sequence is TAAAEPAPLPEEEIRAEHRASPLVDDKQDQG. The segment covering 301–320 has biased composition (basic and acidic residues); that stretch reads EEIRAEHRASPLVDDKQDQG.

This sequence belongs to the phosphatidylserine decarboxylase family. PSD-B subfamily. Prokaryotic type I sub-subfamily. In terms of assembly, heterodimer of a large membrane-associated beta subunit and a small pyruvoyl-containing alpha subunit. Requires pyruvate as cofactor. Post-translationally, is synthesized initially as an inactive proenzyme. Formation of the active enzyme involves a self-maturation process in which the active site pyruvoyl group is generated from an internal serine residue via an autocatalytic post-translational modification. Two non-identical subunits are generated from the proenzyme in this reaction, and the pyruvate is formed at the N-terminus of the alpha chain, which is derived from the carboxyl end of the proenzyme. The autoendoproteolytic cleavage occurs by a canonical serine protease mechanism, in which the side chain hydroxyl group of the serine supplies its oxygen atom to form the C-terminus of the beta chain, while the remainder of the serine residue undergoes an oxidative deamination to produce ammonia and the pyruvoyl prosthetic group on the alpha chain. During this reaction, the Ser that is part of the protease active site of the proenzyme becomes the pyruvoyl prosthetic group, which constitutes an essential element of the active site of the mature decarboxylase.

The protein resides in the cell membrane. It catalyses the reaction a 1,2-diacyl-sn-glycero-3-phospho-L-serine + H(+) = a 1,2-diacyl-sn-glycero-3-phosphoethanolamine + CO2. It functions in the pathway phospholipid metabolism; phosphatidylethanolamine biosynthesis; phosphatidylethanolamine from CDP-diacylglycerol: step 2/2. Its function is as follows. Catalyzes the formation of phosphatidylethanolamine (PtdEtn) from phosphatidylserine (PtdSer). This Klebsiella pneumoniae subsp. pneumoniae (strain ATCC 700721 / MGH 78578) protein is Phosphatidylserine decarboxylase proenzyme.